Reading from the N-terminus, the 312-residue chain is Isethionate sulfite-lyase activating enzyme (312 aa).

The Radical SAM core domain occupies 22–309; that stretch reads HDGPGIRTIV…VDETRGAVTE (288 aa). 11 residues coordinate [4Fe-4S] cluster: cysteine 36, cysteine 40, cysteine 43, cysteine 62, cysteine 65, cysteine 68, cysteine 72, cysteine 92, cysteine 95, cysteine 100, and cysteine 104. 42-44 is an S-adenosyl-L-methionine binding site; that stretch reads WCS. 4Fe-4S ferredoxin-type domains follow at residues 53 to 82 and 83 to 115; these read PQVA…VNED and GTLS…YGEN. S-adenosyl-L-methionine-binding positions include glycine 144, 193-195, and histidine 267; that span reads DVK.

Belongs to the organic radical-activating enzymes family. In terms of assembly, monomer. [4Fe-4S] cluster serves as cofactor.

The enzyme catalyses glycyl-[protein] + reduced [flavodoxin] + S-adenosyl-L-methionine = glycin-2-yl radical-[protein] + semiquinone [flavodoxin] + 5'-deoxyadenosine + L-methionine + H(+). It participates in organosulfur degradation; alkanesulfonate degradation. In terms of biological role, involved in an anaerobic respiration pathway that converts the sulfonate taurine (2-aminoethanesulfonate) to ammonia, acetate and sulfide. Catalyzes activation of the isethionate sulfite-lyase IslA under anaerobic conditions by generation of an organic free radical on a glycine residue, via a homolytic cleavage of S-adenosyl-L-methionine (SAM). In Bilophila wadsworthia (strain 3_1_6), this protein is Isethionate sulfite-lyase activating enzyme.